The following is a 500-amino-acid chain: MTLVDVRTPDPKRFIPGATGDWEVIVGMEVHAQVLSNSKLFSGASTEFGKPQNSNVSMVDAAMPGMLPVINEECVKQAVRTGLGLKAQINKRSLFDRKNYFYPDLPQGYQISQFKDPIVGEGKIVISLGPDRQGQFEDIEIGIERLHLEQDAGKSMHDQHATMSYVDLNRSGVALMEIVSKPDMRSSDEAKAYMTKLRSIVRYLGTCDGNMDEGSMRADVNVSVRRPGEDFGTRCEIKNVNSIRFIGQAIEYEARRQIGILEDGGKIDQETRLFDPNKGETRSMRSKEDAHDYRYFPDPDLLPLEFDDAFIKALEADLPELPDDKKERFVRELGLSIYDASVLVSEKAIADYFEAVAAGRDGKTAANWVINDLLGALNRTGKDIEQTPVSPAQLGAIIDLIKAGTISGKIAKDLFEIVLAEGGDPAEIVEARGMKQVTDTGAIEKAVDEIIAANPDQVEKVKAKPTMAAWFVGQVMKATGGKANPQAVQALVKAKLGIEE.

The protein belongs to the GatB/GatE family. GatB subfamily. In terms of assembly, heterotrimer of A, B and C subunits.

The enzyme catalyses L-glutamyl-tRNA(Gln) + L-glutamine + ATP + H2O = L-glutaminyl-tRNA(Gln) + L-glutamate + ADP + phosphate + H(+). The catalysed reaction is L-aspartyl-tRNA(Asn) + L-glutamine + ATP + H2O = L-asparaginyl-tRNA(Asn) + L-glutamate + ADP + phosphate + 2 H(+). Allows the formation of correctly charged Asn-tRNA(Asn) or Gln-tRNA(Gln) through the transamidation of misacylated Asp-tRNA(Asn) or Glu-tRNA(Gln) in organisms which lack either or both of asparaginyl-tRNA or glutaminyl-tRNA synthetases. The reaction takes place in the presence of glutamine and ATP through an activated phospho-Asp-tRNA(Asn) or phospho-Glu-tRNA(Gln). This is Aspartyl/glutamyl-tRNA(Asn/Gln) amidotransferase subunit B from Rhizobium johnstonii (strain DSM 114642 / LMG 32736 / 3841) (Rhizobium leguminosarum bv. viciae).